A 130-amino-acid chain; its full sequence is Small ribosomal subunit protein uS8 (130 aa).

Belongs to the universal ribosomal protein uS8 family. In terms of assembly, part of the 30S ribosomal subunit. Contacts proteins S5 and S12.

Its function is as follows. One of the primary rRNA binding proteins, it binds directly to 16S rRNA central domain where it helps coordinate assembly of the platform of the 30S subunit. The protein is Small ribosomal subunit protein uS8 of Teredinibacter turnerae (strain ATCC 39867 / T7901).